The primary structure comprises 416 residues: Putative competence-damage inducible protein (416 aa).

It belongs to the CinA family.

The polypeptide is Putative competence-damage inducible protein (Levilactobacillus brevis (strain ATCC 367 / BCRC 12310 / CIP 105137 / JCM 1170 / LMG 11437 / NCIMB 947 / NCTC 947) (Lactobacillus brevis)).